A 405-amino-acid polypeptide reads, in one-letter code: Replication factor C large subunit (405 aa).

47-54 (GPPGVGKT) contributes to the ATP binding site.

This sequence belongs to the activator 1 small subunits family. RfcL subfamily. In terms of assembly, heteromultimer composed of small subunits (RfcS) and large subunits (RfcL).

Its function is as follows. Part of the RFC clamp loader complex which loads the PCNA sliding clamp onto DNA. The protein is Replication factor C large subunit of Saccharolobus islandicus (strain M.16.27) (Sulfolobus islandicus).